The sequence spans 79 residues: Ribonuclease P protein component 1 (79 aa).

This sequence belongs to the eukaryotic/archaeal RNase P protein component 1 family. As to quaternary structure, consists of a catalytic RNA component and at least 4-5 protein subunits.

It is found in the cytoplasm. It catalyses the reaction Endonucleolytic cleavage of RNA, removing 5'-extranucleotides from tRNA precursor.. In terms of biological role, part of ribonuclease P, a protein complex that generates mature tRNA molecules by cleaving their 5'-ends. This Saccharolobus solfataricus (strain ATCC 35092 / DSM 1617 / JCM 11322 / P2) (Sulfolobus solfataricus) protein is Ribonuclease P protein component 1.